Reading from the N-terminus, the 121-residue chain is Small ribosomal subunit protein uS13 (121 aa).

A disordered region spans residues 92-121 (HRMGLPCRGQKTKTNARTRKGPRRGAARRK). Residues 101-121 (QKTKTNARTRKGPRRGAARRK) show a composition bias toward basic residues.

This sequence belongs to the universal ribosomal protein uS13 family. In terms of assembly, part of the 30S ribosomal subunit. Forms a loose heterodimer with protein S19. Forms two bridges to the 50S subunit in the 70S ribosome.

Its function is as follows. Located at the top of the head of the 30S subunit, it contacts several helices of the 16S rRNA. In the 70S ribosome it contacts the 23S rRNA (bridge B1a) and protein L5 of the 50S subunit (bridge B1b), connecting the 2 subunits; these bridges are implicated in subunit movement. Contacts the tRNAs in the A and P-sites. This Desulfotalea psychrophila (strain LSv54 / DSM 12343) protein is Small ribosomal subunit protein uS13.